Here is an 88-residue protein sequence, read N- to C-terminus: Platelet factor 4 (88 aa).

A glycan (O-linked (GalNAc...) threonine) is linked at T7. Cystine bridges form between C25–C51 and C27–C67. S41 carries the phosphoserine modification. Residue 76–82 (KKILKKL) participates in heparin binding.

This sequence belongs to the intercrine alpha (chemokine CxC) family. Homotetramer. Interacts with TNFAIP6 (via Link domain). Interacts with CCR1. Interacts with CXCR3. Interacts with THBD; this interaction enhances generation of activated protein C. O-linked glycan consists of Gal-GalNAc disaccharide which is modified with sialic acid residues (microheterogeneity).

The protein resides in the secreted. Its function is as follows. Chemokine released during platelet aggregation that plays a role in different biological processes including hematopoiesis, cell proliferation, differentiation, and activation. Acts via different functional receptors including CCR1, CXCR3A or CXCR3B. Upon interaction with CXCR3A receptor, induces activated T-lymphocytes migration mediated via downstream Ras/extracellular signal-regulated kinase (ERK) signaling. Neutralizes the anticoagulant effect of heparin by binding more strongly to heparin than to the chondroitin-4-sulfate chains of the carrier molecule. Plays a role in the inhibition of hematopoiesis and in the maintenance of hematopoietic stem cell (HSC) quiescence. Chemotactic for neutrophils and monocytes via CCR1. Inhibits endothelial cell proliferation. In cooperation with toll-like receptor 8/TLR8, induces chromatin remodeling and activates inflammatory gene expression via the TBK1-IRF5 axis. In addition, induces myofibroblast differentiation and collagen synthesis in different precursor cells, including endothelial cells, by stimulating endothelial-to-mesenchymal transition. Interacts with thrombomodulin/THBD to enhance the activation of protein C and thus potentiates its anticoagulant activity. The protein is Platelet factor 4 (PF4) of Bos taurus (Bovine).